The primary structure comprises 613 residues: Proline--tRNA ligase (613 aa).

The protein belongs to the class-II aminoacyl-tRNA synthetase family. ProS type 1 subfamily. In terms of assembly, homodimer.

It is found in the cytoplasm. The catalysed reaction is tRNA(Pro) + L-proline + ATP = L-prolyl-tRNA(Pro) + AMP + diphosphate. Functionally, catalyzes the attachment of proline to tRNA(Pro) in a two-step reaction: proline is first activated by ATP to form Pro-AMP and then transferred to the acceptor end of tRNA(Pro). As ProRS can inadvertently accommodate and process non-cognate amino acids such as alanine and cysteine, to avoid such errors it has two additional distinct editing activities against alanine. One activity is designated as 'pretransfer' editing and involves the tRNA(Pro)-independent hydrolysis of activated Ala-AMP. The other activity is designated 'posttransfer' editing and involves deacylation of mischarged Ala-tRNA(Pro). The misacylated Cys-tRNA(Pro) is not edited by ProRS. This Tropheryma whipplei (strain Twist) (Whipple's bacillus) protein is Proline--tRNA ligase.